The primary structure comprises 422 residues: Probable protein phosphatase 2C 69 (422 aa).

Residues threonine 45–isoleucine 294 enclose the PPM-type phosphatase domain. Residues aspartate 70, glycine 71, aspartate 246, and aspartate 285 each coordinate Mn(2+).

This sequence belongs to the PP2C family. It depends on Mg(2+) as a cofactor. Requires Mn(2+) as cofactor.

The enzyme catalyses O-phospho-L-seryl-[protein] + H2O = L-seryl-[protein] + phosphate. It catalyses the reaction O-phospho-L-threonyl-[protein] + H2O = L-threonyl-[protein] + phosphate. The sequence is that of Probable protein phosphatase 2C 69 from Oryza sativa subsp. japonica (Rice).